A 1137-amino-acid chain; its full sequence is 2'-5'-oligoadenylate synthase 3 (1137 aa).

An N-acetylmethionine modification is found at Met-1. Positions 6-341 are OAS domain 1; the sequence is TPAGALDKLV…GALVQPWEGP (336 aa). Interaction with dsRNA regions lie at residues 12-56 and 185-199; these read DKLV…VIRI and ELRK…VKLK. The segment at 342 to 461 is linker; it reads GLPCAGILDL…GSQMGPDLSQ (120 aa). The segment covering 434–453 has biased composition (polar residues); sequence QSTASSNTPPGHSSMSTAGS. The segment at 434–462 is disordered; that stretch reads QSTASSNTPPGHSSMSTAGSQMGPDLSQI. 2 OAS domain regions span residues 462-792 and 800-1134; these read IPSK…PWDV and TPAQ…WPVK. ATP is bound at residue Ser-854. Mg(2+) contacts are provided by Asp-866, Asp-868, and Asp-938. Residues Arg-997, Lys-1000, and Gln-1019 each contribute to the ATP site.

The protein belongs to the 2-5A synthase family. As to quaternary structure, monomer. Mg(2+) serves as cofactor.

Its subcellular location is the cytoplasm. The protein resides in the nucleus. The enzyme catalyses 3 ATP = 5'-triphosphoadenylyl-(2'-&gt;5')-adenylyl-(2'-&gt;5')-adenosine + 2 diphosphate. Its activity is regulated as follows. Produced as a latent enzyme which is activated by dsRNA generated during the course of viral infection. Strongly activated by long dsRNAs at least 50 nucleotides in length. ssRNA does not activate the enzyme. In terms of biological role, interferon-induced, dsRNA-activated antiviral enzyme which plays a critical role in cellular innate antiviral response. In addition, it may also play a role in other cellular processes such as apoptosis, cell growth, differentiation and gene regulation. Synthesizes preferentially dimers of 2'-5'-oligoadenylates (2-5A) from ATP which then bind to the inactive monomeric form of ribonuclease L (RNase L) leading to its dimerization and subsequent activation. Activation of RNase L leads to degradation of cellular as well as viral RNA, resulting in the inhibition of protein synthesis, thus terminating viral replication. Can mediate the antiviral effect via the classical RNase L-dependent pathway or an alternative antiviral pathway independent of RNase L. This is 2'-5'-oligoadenylate synthase 3 (Oas3) from Rattus norvegicus (Rat).